Here is a 296-residue protein sequence, read N- to C-terminus: Diheme cytochrome c-type (296 aa).

C52, C55, H56, C202, C205, and H206 together coordinate heme c.

Post-translationally, binds 2 heme c groups covalently per subunit.

Its subcellular location is the cell membrane. Particularly expressed when cells generate energy via aerobic respiration. The sequence is that of Diheme cytochrome c-type (cycG) from Cereibacter sphaeroides (strain ATCC 17023 / DSM 158 / JCM 6121 / CCUG 31486 / LMG 2827 / NBRC 12203 / NCIMB 8253 / ATH 2.4.1.) (Rhodobacter sphaeroides).